A 221-amino-acid polypeptide reads, in one-letter code: 6-phosphogluconate phosphatase (221 aa).

D10 acts as the Nucleophile in catalysis. Residues D10, D12, and D167 each coordinate Mg(2+). 10–12 (DCD) is a binding site for substrate.

It belongs to the HAD-like hydrolase superfamily. CbbY/CbbZ/Gph/YieH family. It depends on Mg(2+) as a cofactor. Mn(2+) serves as cofactor. Co(2+) is required as a cofactor. The cofactor is Zn(2+).

Its function is as follows. Catalyzes strongly the dephosphorylation of 6-phosphogluconate (6P-Glu) and slightly the dephosphorylation of dihydroxyacetone phosphate (DHAP) and phosphoenolpyruvate (PEP). Also hydrolyzes both purines (GMP and IMP) and pyrimidines as secondary substrates. The polypeptide is 6-phosphogluconate phosphatase (yieH) (Escherichia coli (strain K12)).